Reading from the N-terminus, the 500-residue chain is Lysine--tRNA ligase (500 aa).

Mg(2+)-binding residues include Glu-410 and Glu-417.

The protein belongs to the class-II aminoacyl-tRNA synthetase family. Homodimer. It depends on Mg(2+) as a cofactor.

It localises to the cytoplasm. It carries out the reaction tRNA(Lys) + L-lysine + ATP = L-lysyl-tRNA(Lys) + AMP + diphosphate. In Shewanella oneidensis (strain ATCC 700550 / JCM 31522 / CIP 106686 / LMG 19005 / NCIMB 14063 / MR-1), this protein is Lysine--tRNA ligase.